Here is a 532-residue protein sequence, read N- to C-terminus: D-arabinono-1,4-lactone oxidase (532 aa).

The FAD-binding PCMH-type domain maps to 25 to 199; that stretch reads YSARPRLYFQ…VRATIRVVPA (175 aa). Residue H62 is modified to Pros-8alpha-FAD histidine.

This sequence belongs to the oxygen-dependent FAD-linked oxidoreductase family. FAD serves as cofactor.

The protein localises to the mitochondrion membrane. It carries out the reaction D-arabinono-1,4-lactone + O2 = dehydro-D-arabinono-1,4-lactone + H2O2 + H(+). The protein operates within cofactor biosynthesis; D-erythroascorbate biosynthesis; dehydro-D-arabinono-1,4-lactone from D-arabinose: step 2/2. This Eremothecium gossypii (strain ATCC 10895 / CBS 109.51 / FGSC 9923 / NRRL Y-1056) (Yeast) protein is D-arabinono-1,4-lactone oxidase (ALO1).